The chain runs to 119 residues: MSKATNFYLFVLLGVFVALVRTEDEKPPNLTRVPSGLSFSCDGKKPGYYADQQMECQVYHVCTPDNEHAVLLCGPGTIFNQKHLVCDFPSNYACADAAKDADDANAHAFEVKVSPTPVP.

The N-terminal stretch at 1–22 (MSKATNFYLFVLLGVFVALVRT) is a signal peptide. The Chitin-binding type-2 domain maps to 38–96 (SFSCDGKKPGYYADQQMECQVYHVCTPDNEHAVLLCGPGTIFNQKHLVCDFPSNYACAD). Cys-73 and Cys-86 are joined by a disulfide.

This sequence belongs to the scoloptoxin-01 family. Contains 3 disulfide bonds. In terms of tissue distribution, expressed by the venom gland.

It is found in the secreted. This is U-scoloptoxin(01)-Cw1a from Cormocephalus westwoodi (Westwood's green centipede).